The following is a 480-amino-acid chain: Glycogen synthase (480 aa).

Residue K15 coordinates ADP-alpha-D-glucose.

Belongs to the glycosyltransferase 1 family. Bacterial/plant glycogen synthase subfamily.

It carries out the reaction [(1-&gt;4)-alpha-D-glucosyl](n) + ADP-alpha-D-glucose = [(1-&gt;4)-alpha-D-glucosyl](n+1) + ADP + H(+). It participates in glycan biosynthesis; glycogen biosynthesis. Functionally, synthesizes alpha-1,4-glucan chains using ADP-glucose. This is Glycogen synthase from Desulforamulus reducens (strain ATCC BAA-1160 / DSM 100696 / MI-1) (Desulfotomaculum reducens).